Consider the following 309-residue polypeptide: Lipoyl synthase (309 aa).

Cys43, Cys48, Cys54, Cys70, Cys74, Cys77, and Ser283 together coordinate [4Fe-4S] cluster. Residues 56-272 form the Radical SAM core domain; sequence AVRKTATFMI…KEIAMQKGFS (217 aa).

The protein belongs to the radical SAM superfamily. Lipoyl synthase family. It depends on [4Fe-4S] cluster as a cofactor.

It is found in the cytoplasm. It carries out the reaction [[Fe-S] cluster scaffold protein carrying a second [4Fe-4S](2+) cluster] + N(6)-octanoyl-L-lysyl-[protein] + 2 oxidized [2Fe-2S]-[ferredoxin] + 2 S-adenosyl-L-methionine + 4 H(+) = [[Fe-S] cluster scaffold protein] + N(6)-[(R)-dihydrolipoyl]-L-lysyl-[protein] + 4 Fe(3+) + 2 hydrogen sulfide + 2 5'-deoxyadenosine + 2 L-methionine + 2 reduced [2Fe-2S]-[ferredoxin]. The protein operates within protein modification; protein lipoylation via endogenous pathway; protein N(6)-(lipoyl)lysine from octanoyl-[acyl-carrier-protein]. Catalyzes the radical-mediated insertion of two sulfur atoms into the C-6 and C-8 positions of the octanoyl moiety bound to the lipoyl domains of lipoate-dependent enzymes, thereby converting the octanoylated domains into lipoylated derivatives. This Shouchella clausii (strain KSM-K16) (Alkalihalobacillus clausii) protein is Lipoyl synthase.